We begin with the raw amino-acid sequence, 145 residues long: MSTTTEVVAHHWAFAVFLIVSIGLCCLMLAGAWFLGGKARGRHTNTPFESGIASVGTAKLRLSAKFYLVAMFFVIFDVEALYLYAWSTAIRESGWVGFVEAAIFILVLLAGLFYLVRIGALDWAPARRQFDVKPTTISHANRQKP.

The next 3 helical transmembrane spans lie at 14-34 (FAVF…GAWF), 66-86 (FYLV…LYAW), and 96-116 (VGFV…FYLV).

The protein belongs to the complex I subunit 3 family. As to quaternary structure, NDH-1 is composed of 13 different subunits. Subunits NuoA, H, J, K, L, M, N constitute the membrane sector of the complex.

The protein resides in the cell inner membrane. The catalysed reaction is a quinone + NADH + 5 H(+)(in) = a quinol + NAD(+) + 4 H(+)(out). Its function is as follows. NDH-1 shuttles electrons from NADH, via FMN and iron-sulfur (Fe-S) centers, to quinones in the respiratory chain. The immediate electron acceptor for the enzyme in this species is believed to be ubiquinone. Couples the redox reaction to proton translocation (for every two electrons transferred, four hydrogen ions are translocated across the cytoplasmic membrane), and thus conserves the redox energy in a proton gradient. This chain is NADH-quinone oxidoreductase subunit A, found in Erwinia tasmaniensis (strain DSM 17950 / CFBP 7177 / CIP 109463 / NCPPB 4357 / Et1/99).